The following is a 165-amino-acid chain: NADPH-dependent 7-cyano-7-deazaguanine reductase (165 aa).

Cysteine 56 (thioimide intermediate) is an active-site residue. Aspartate 63 acts as the Proton donor in catalysis. Substrate contacts are provided by residues 78-80 and 97-98; these read VES and HE.

The protein belongs to the GTP cyclohydrolase I family. QueF type 1 subfamily.

It is found in the cytoplasm. It catalyses the reaction 7-aminomethyl-7-carbaguanine + 2 NADP(+) = 7-cyano-7-deazaguanine + 2 NADPH + 3 H(+). The protein operates within tRNA modification; tRNA-queuosine biosynthesis. Its function is as follows. Catalyzes the NADPH-dependent reduction of 7-cyano-7-deazaguanine (preQ0) to 7-aminomethyl-7-deazaguanine (preQ1). The chain is NADPH-dependent 7-cyano-7-deazaguanine reductase from Bacillus licheniformis (strain ATCC 14580 / DSM 13 / JCM 2505 / CCUG 7422 / NBRC 12200 / NCIMB 9375 / NCTC 10341 / NRRL NRS-1264 / Gibson 46).